Reading from the N-terminus, the 201-residue chain is MKVLILDNYDSFTFNLYQIVGEILEEREKPFQLDVIRNDEKPFEWIKSANYDKIIISPGPGHPADPAYFGVSADILKELGKTPPVLGICLGMQGMATVFGGEVVRANIAMHGKLSPIEHDGKGVFSGLTQGIEIMRYHSLVAKEISLPNDLEITARVSAGEGKGEIMGLRHKSLKIEGVQFHPESFGSEEGKCLLRNFINS.

Positions 2-201 constitute a Glutamine amidotransferase type-1 domain; it reads KVLILDNYDS…KCLLRNFINS (200 aa). 59 to 61 contacts L-glutamine; the sequence is GPG. Residue Cys89 is the Nucleophile; for GATase activity of the active site. Residues Gln93 and 139 to 140 contribute to the L-glutamine site; that span reads SL. Active-site for GATase activity residues include His182 and Glu184.

Heterotetramer consisting of two non-identical subunits: a beta subunit (TrpG) and a large alpha subunit (TrpE).

The enzyme catalyses chorismate + L-glutamine = anthranilate + pyruvate + L-glutamate + H(+). Its pathway is amino-acid biosynthesis; L-tryptophan biosynthesis; L-tryptophan from chorismate: step 1/5. In terms of biological role, part of a heterotetrameric complex that catalyzes the two-step biosynthesis of anthranilate, an intermediate in the biosynthesis of L-tryptophan. In the first step, the glutamine-binding beta subunit (TrpG) of anthranilate synthase (AS) provides the glutamine amidotransferase activity which generates ammonia as a substrate that, along with chorismate, is used in the second step, catalyzed by the large alpha subunit of AS (TrpE) to produce anthranilate. In the absence of TrpG, TrpE can synthesize anthranilate directly from chorismate and high concentrations of ammonia. The chain is Anthranilate synthase component 2 (trpG) from Leptospira biflexa.